The chain runs to 70 residues: ATP synthase subunit c (70 aa).

Helical transmembrane passes span 4 to 24 (IAAA…NGLI) and 49 to 69 (GIAL…LAFF).

Belongs to the ATPase C chain family. As to quaternary structure, F-type ATPases have 2 components, F(1) - the catalytic core - and F(0) - the membrane proton channel. F(1) has five subunits: alpha(3), beta(3), gamma(1), delta(1), epsilon(1). F(0) has three main subunits: a(1), b(2) and c(10-14). The alpha and beta chains form an alternating ring which encloses part of the gamma chain. F(1) is attached to F(0) by a central stalk formed by the gamma and epsilon chains, while a peripheral stalk is formed by the delta and b chains. The F(1)F(0) complex interacts with SpoIIIJ and YqjG; YqgA is found in the same complex.

The protein localises to the cell membrane. Functionally, f(1)F(0) ATP synthase produces ATP from ADP in the presence of a proton or sodium gradient. F-type ATPases consist of two structural domains, F(1) containing the extramembraneous catalytic core and F(0) containing the membrane proton channel, linked together by a central stalk and a peripheral stalk. During catalysis, ATP synthesis in the catalytic domain of F(1) is coupled via a rotary mechanism of the central stalk subunits to proton translocation. Key component of the F(0) channel; it plays a direct role in translocation across the membrane. A homomeric c-ring of between 10-14 subunits forms the central stalk rotor element with the F(1) delta and epsilon subunits. The protein is ATP synthase subunit c of Bacillus subtilis (strain 168).